Reading from the N-terminus, the 435-residue chain is Tumor necrosis factor receptor superfamily member 3 (435 aa).

Positions 1 to 30 (MLLPWATSAPGLAWGPLVLGLFGLLAASQP) are cleaved as a signal peptide. At 31–227 (QAVPPYASEN…PPEMSGTMLM (197 aa)) the chain is on the extracellular side. N40 carries an N-linked (GlcNAc...) asparagine glycan. 4 TNFR-Cys repeats span residues 42–81 (TCRD…TVCA), 82–124 (TCAE…KTQC), 125–168 (RCQP…NHCV), and 169–211 (PCKA…TTCK). Disulfide bonds link C43–C58, C59–C72, C62–C80, C83–C98, C101–C116, C104–C124, C126–C132, C139–C148, C142–C167, and C170–C185. N-linked (GlcNAc...) asparagine glycosylation occurs at N177. A helical membrane pass occupies residues 228-248 (LAVLLPLAFFLLLATVFSCIW). At 249 to 435 (KSHPSLCRKL…GPRNQFITHD (187 aa)) the chain is on the cytoplasmic side. Phosphoserine is present on S323. Positions 373–399 (PGPGDLPATPEPPYPIPEEGDPGPPGL) are enriched in pro residues. Residues 373-435 (PGPGDLPATP…GPRNQFITHD (63 aa)) are disordered. Over residues 403–417 (HQEDGKAWHLAETEH) the composition is skewed to basic and acidic residues. Over residues 421 to 435 (TPSNRGPRNQFITHD) the composition is skewed to polar residues.

As to quaternary structure, self-associates; dimerization and trimerization are promoted by lymphotoxin (LTA(1)-LTB(2)). Associates with TRAF3. Associates with TRAF4. Associates with TRAF5. Interacts with Aedes aegypti lymphotoxin beta receptor inhibitor; the interaction reduces dimerization and trimerization of LTBR induced by lymphotoxin (LTA(1)-LTB(2)). (Microbial infection) Interacts with HCV core protein.

Its subcellular location is the membrane. In terms of biological role, receptor for the heterotrimeric lymphotoxin containing LTA and LTB, and for TNFS14/LIGHT. Activates NF-kappa-B signaling pathway upon stimulation with lymphotoxin (LTA(1)-LTB(2)). Promotes apoptosis via TRAF3 and TRAF5. May play a role in the development of lymphoid organs. The chain is Tumor necrosis factor receptor superfamily member 3 (LTBR) from Homo sapiens (Human).